Here is a 734-residue protein sequence, read N- to C-terminus: Casein kinase II subunit alpha'-interacting protein (734 aa).

The tract at residues 608-654 is disordered; the sequence is SLLPSTSSSTSSSSTTSSSSSVASASSDSSSSSSSSSSFSISSSSSP. The span at 612–654 shows a compositional bias: low complexity; sequence STSSSTSSSSTTSSSSSVASASSDSSSSSSSSSSFSISSSSSP.

Interacts (via C-terminus) with CSNK2A2. Phosphorylated by CK2 (casein kinase II), specifically by complexes containing catalytic subunit CSNK2A2.

It localises to the nucleus. Functionally, may play a role in chromatin regulation of male germ cells. The chain is Casein kinase II subunit alpha'-interacting protein from Homo sapiens (Human).